Here is a 124-residue protein sequence, read N- to C-terminus: Putative iron-sulfur cluster insertion protein ErpA 2 (124 aa).

Residues C52, C116, and C118 each contribute to the iron-sulfur cluster site.

This sequence belongs to the HesB/IscA family. Homodimer. Iron-sulfur cluster serves as cofactor.

Required for insertion of 4Fe-4S clusters. This is Putative iron-sulfur cluster insertion protein ErpA 2 from Burkholderia vietnamiensis (strain G4 / LMG 22486) (Burkholderia cepacia (strain R1808)).